The sequence spans 135 residues: MQARAIQKNIHVSPRKAKLVCDLIRNKPVTNALSILENTNKKTAVFLKKLLHQAIANATNNHAMQADKLYVYHVVANQGSTLKRTSPRAKGSADLIRKRHTHLEIVLSDDVNERNKEIQAIKDRIKKRAANNKGY.

It belongs to the universal ribosomal protein uL22 family. In terms of assembly, part of the 50S ribosomal subunit.

Its function is as follows. This protein binds specifically to 23S rRNA; its binding is stimulated by other ribosomal proteins, e.g. L4, L17, and L20. It is important during the early stages of 50S assembly. It makes multiple contacts with different domains of the 23S rRNA in the assembled 50S subunit and ribosome. The globular domain of the protein is located near the polypeptide exit tunnel on the outside of the subunit, while an extended beta-hairpin is found that lines the wall of the exit tunnel in the center of the 70S ribosome. This is Large ribosomal subunit protein uL22 from Malacoplasma penetrans (strain HF-2) (Mycoplasma penetrans).